The primary structure comprises 254 residues: Zinc transporter GufA (254 aa).

A run of 7 helical transmembrane segments spans residues 4–24 (GLVA…PVLV), 74–94 (VAAG…LMPH), 112–132 (ALLF…AVGV), 143–163 (LSVA…VALA), 176–196 (FLAL…VLAL), 198–218 (LSSA…LYVI), and 234–254 (EATT…MSLG). Residues Asn123, Glu126, Gln152, Asn153, Glu156, and Glu185 each contribute to the Zn(2+) site.

Belongs to the ZIP transporter (TC 2.A.5) family. As to quaternary structure, homodimer.

It is found in the cell inner membrane. In terms of biological role, mediates the uptake of Zn(2+). The polypeptide is Zinc transporter GufA (gufA) (Myxococcus xanthus).